The chain runs to 1008 residues: DNA polymerase (1008 aa).

This sequence belongs to the DNA polymerase type-B family. In terms of assembly, interacts with A20. Component of the Uracil-DNA glycosylase(UDG)-A20-polymerase complex; A20 and UDG form a heterodimeric processivity factor that associates with E9 to form the processive polymerase holoenzyme.

The enzyme catalyses DNA(n) + a 2'-deoxyribonucleoside 5'-triphosphate = DNA(n+1) + diphosphate. Its function is as follows. Catalyzes DNA synthesis. Acquires processivity by associating with a heterodimeric processivity factor comprised of the viral A20 and D4 proteins, thereby forming the DNA polymerase holoenzyme. Displays 3'- to 5' exonuclease activity. Might participate in viral DNA recombination. Does not perform translesion synthesis across an abasic site. The chain is DNA polymerase (POL) from Capra hircus (Goat).